The chain runs to 729 residues: Polyribonucleotide nucleotidyltransferase (729 aa).

Mg(2+) contacts are provided by D509 and D515. Positions 575-634 (PRVISVKIPVDKIGEVIGPKGKMINQIQADSGAEITVEDDGTIYIGAVDGPSAESARSAI) constitute a KH domain. The 73-residue stretch at 646 to 718 (GERYLGTIVK…SRGKISLSPS (73 aa)) folds into the S1 motif domain.

Belongs to the polyribonucleotide nucleotidyltransferase family. Mg(2+) serves as cofactor.

It localises to the cytoplasm. The catalysed reaction is RNA(n+1) + phosphate = RNA(n) + a ribonucleoside 5'-diphosphate. Involved in mRNA degradation. Catalyzes the phosphorolysis of single-stranded polyribonucleotides processively in the 3'- to 5'-direction. The chain is Polyribonucleotide nucleotidyltransferase from Frankia casuarinae (strain DSM 45818 / CECT 9043 / HFP020203 / CcI3).